Reading from the N-terminus, the 265-residue chain is Indole-3-glycerol phosphate synthase (265 aa).

It belongs to the TrpC family.

It carries out the reaction 1-(2-carboxyphenylamino)-1-deoxy-D-ribulose 5-phosphate + H(+) = (1S,2R)-1-C-(indol-3-yl)glycerol 3-phosphate + CO2 + H2O. Its pathway is amino-acid biosynthesis; L-tryptophan biosynthesis; L-tryptophan from chorismate: step 4/5. The protein is Indole-3-glycerol phosphate synthase of Desulforamulus reducens (strain ATCC BAA-1160 / DSM 100696 / MI-1) (Desulfotomaculum reducens).